We begin with the raw amino-acid sequence, 86 residues long: Acyl carrier protein (86 aa).

A Carrier domain is found at 7 to 85 (SKVDNIEQKV…DVVNYIKEHK (79 aa)). O-(pantetheine 4'-phosphoryl)serine is present on serine 45.

This sequence belongs to the acyl carrier protein (ACP) family. In terms of processing, 4'-phosphopantetheine is transferred from CoA to a specific serine of apo-ACP by AcpS. This modification is essential for activity because fatty acids are bound in thioester linkage to the sulfhydryl of the prosthetic group.

It is found in the cytoplasm. It functions in the pathway lipid metabolism; fatty acid biosynthesis. In terms of biological role, carrier of the growing fatty acid chain in fatty acid biosynthesis. This is Acyl carrier protein from Rickettsia bellii (strain RML369-C).